Reading from the N-terminus, the 1331-residue chain is Alpha,alpha-trehalose-phosphate synthase [UDP-forming] 1 (1331 aa).

A compositionally biased stretch (polar residues) spans M1–N13. Disordered stretches follow at residues M1–P50, T71–L118, and P1312–N1331. A compositionally biased stretch (basic and acidic residues) spans D39 to P50. A compositionally biased stretch (acidic residues) spans L77–G98. Residues N102–D112 are compositionally biased toward basic and acidic residues. The span at S1318–N1331 shows a compositional bias: polar residues.

It in the N-terminal section; belongs to the glycosyltransferase 20 family. In the C-terminal section; belongs to the gob-1 trehalose phosphatase family.

It catalyses the reaction D-glucose 6-phosphate + UDP-alpha-D-glucose = alpha,alpha-trehalose 6-phosphate + UDP + H(+). In terms of biological role, catalyzes the production of trehalose from glucose-6-phosphate and UDP-alpha-D-glucose in a 2 step process. In Caenorhabditis elegans, this protein is Alpha,alpha-trehalose-phosphate synthase [UDP-forming] 1 (tps-1).